Consider the following 326-residue polypeptide: Malate dehydrogenase (326 aa).

Position 11–17 (11–17 (GAAGQIG)) interacts with NAD(+). The substrate site is built by R92 and R98. Residues N105, Q112, and 129-131 (VGN) each bind NAD(+). The substrate site is built by N131 and R162. H187 acts as the Proton acceptor in catalysis.

Belongs to the LDH/MDH superfamily. MDH type 2 family.

The catalysed reaction is (S)-malate + NAD(+) = oxaloacetate + NADH + H(+). Functionally, catalyzes the reversible oxidation of malate to oxaloacetate. The chain is Malate dehydrogenase from Halorhodospira halophila (strain DSM 244 / SL1) (Ectothiorhodospira halophila (strain DSM 244 / SL1)).